Consider the following 501-residue polypeptide: Ribose import ATP-binding protein RbsA (501 aa).

ABC transporter domains are found at residues leucine 5–lysine 241 and alanine 252–leucine 495. Residue glycine 37–serine 44 participates in ATP binding.

This sequence belongs to the ABC transporter superfamily. Ribose importer (TC 3.A.1.2.1) family. In terms of assembly, the complex is composed of an ATP-binding protein (RbsA), two transmembrane proteins (RbsC) and a solute-binding protein (RbsB).

The protein localises to the cell inner membrane. It carries out the reaction D-ribose(out) + ATP + H2O = D-ribose(in) + ADP + phosphate + H(+). Its function is as follows. Part of the ABC transporter complex RbsABC involved in ribose import. Responsible for energy coupling to the transport system. The sequence is that of Ribose import ATP-binding protein RbsA from Shigella sonnei (strain Ss046).